We begin with the raw amino-acid sequence, 179 residues long: Large ribosomal subunit protein uL5c (179 aa).

It belongs to the universal ribosomal protein uL5 family. As to quaternary structure, part of the 50S ribosomal subunit; contacts the 5S rRNA.

The protein localises to the plastid. It localises to the chloroplast. In terms of biological role, binds 5S rRNA, forms part of the central protuberance of the 50S subunit. The sequence is that of Large ribosomal subunit protein uL5c (rpl5) from Euglena gracilis.